The chain runs to 561 residues: Corneodesmosin (561 aa).

A signal peptide spans 1-32 (MGSSRAPRMGSVGGHGLMALLMAGLILPGILA). Disordered regions lie at residues 41 to 275 (PCKD…HTVS), 415 to 466 (GSVS…SSSL), and 536 to 561 (PLGP…LEKS). Residues 61–99 (GSNSISSQGGSSSFSSQGGSSSFSSHGGSSSSQGSSSGS) show a composition bias toward low complexity. Gly residues predominate over residues 116 to 127 (GSGGSRPGGSGS). Low complexity-rich tracts occupy residues 128-207 (QSGS…SSGS) and 224-248 (TSGM…PCSS). The segment covering 415–430 (GSVSSKGPCSGTRIQI) has biased composition (polar residues). Low complexity predominate over residues 431 to 466 (TSSSSSTSYHPCSGGPSQGPCSSPGTGSISGGSSSL).

The protein localises to the secreted. Important for the epidermal barrier integrity. This chain is Corneodesmosin (Cdsn), found in Mus musculus (Mouse).